The primary structure comprises 108 residues: Putative pterin-4-alpha-carbinolamine dehydratase (108 aa).

This sequence belongs to the pterin-4-alpha-carbinolamine dehydratase family.

It catalyses the reaction (4aS,6R)-4a-hydroxy-L-erythro-5,6,7,8-tetrahydrobiopterin = (6R)-L-erythro-6,7-dihydrobiopterin + H2O. This chain is Putative pterin-4-alpha-carbinolamine dehydratase, found in Chromobacterium violaceum (strain ATCC 12472 / DSM 30191 / JCM 1249 / CCUG 213 / NBRC 12614 / NCIMB 9131 / NCTC 9757 / MK).